The chain runs to 551 residues: MPSARLQQQFIRLWQCCEGKSQETTLNELAALLSCSRRHMRTLLNTMQDRGWLTWEAEVGRGKRSRLTFLYTGLALQQQRAEDLLEQDRIDQLVQLVGDKATVRQMLVSHLGRSFRQGRHILRVLYYRPLRNLLPGSALRRSETHIARQIFSSLTRINEENGELEADIAHHWQQISPLHWRFFLRPGVHFHHGRELEMDDVIASLKRINTLPLYSHIANIVSPTPWTLDIHLTQPDRWLPLLLGQVPAMILPREWETLSNFASHPIGTGPYAVIRNSTNQLKIQAFDDFFGYRALIDEVNVWVLPEIADEPAGGLMLKGPQGEEKEIESRLEEGCYYLLFDSRTHRGANQQVRDWVSYVLSPTNLVYFAEEQYQQLWFPAYGLLPRWHHARTIKSEKPAGLESLTLTFYQDHSEHRVIAGIMQQILASHQVTLEIKEISYDQWHEGEIESDIWLNSANFTLPLDFSLFAHLCEVPLLQHCIPIDWQADAARWRNGEMNLANWCQQLVASKAMVPLIHHWLIIQGQRSMRGLRMNTLGWFDFKSAWFAPPDP.

Residues 1–116 enclose the HTH marR-type domain; the sequence is MPSARLQQQF…LVSHLGRSFR (116 aa). Positions 26–49 form a DNA-binding region, H-T-H motif; sequence LNELAALLSCSRRHMRTLLNTMQD. Residues 163–492 are solute-binding; the sequence is ELEADIAHHW…IDWQADAARW (330 aa).

Activates the small RNA gene sgrS under glucose-phosphate stress conditions as well as yfdZ. Represses its own transcription under both stress and non-stress conditions. Might act as a sensor of the intracellular accumulation of phosphoglucose by binding these molecules in its C-terminal solute-binding domain. This is HTH-type transcriptional regulator SgrR from Escherichia coli O1:K1 / APEC.